The chain runs to 528 residues: Low affinity inorganic phosphate transporter 4 (528 aa).

Topologically, residues 1–18 (MGLEVLEALDSARTQWYH) are cytoplasmic. Residues 19–39 (VTAIVIAGMGFFTDAYDLFCI) traverse the membrane as a helical segment. The Extracellular portion of the chain corresponds to 40 to 68 (STVSKLLGRLYYFDPSTNKPGKLPPSVNN). Residues 69-89 (VVTGVALVGTLSGQLVFGWLG) form a helical membrane-spanning segment. At 90-96 (DKLGRKK) the chain is on the cytoplasmic side. Residues 97–117 (VYGVTLIIMVACAICSGLSFG) form a helical membrane-spanning segment. Over 118–122 (SSAKS) the chain is Extracellular. The chain crosses the membrane as a helical span at residues 123–143 (VMITLCFFRFWLGFGIGGDYP). The Cytoplasmic segment spans residues 144–158 (LSATIMSEYANKRTR). Residues 159-179 (GAFIAAVFAMQGVGIIFAGLV) traverse the membrane as a helical segment. The Extracellular segment spans residues 180–208 (SMVFSGIFKAYYQAPRFNEDPILSTQPEG). A helical membrane pass occupies residues 209-229 (DLLWRLILMIGAVPAAMTYYW). Topologically, residues 230 to 292 (RMKMPETGRY…SEFFNRHGRH (63 aa)) are cytoplasmic. A helical transmembrane segment spans residues 293 to 313 (LIGTMSCWFLLDIAFYSQNLT). Over 314-341 (QKDIYPAMGLIRQDKEMNAIDEVFQTSR) the chain is Extracellular. The helical transmembrane segment at 342-362 (AMFVVALFGTFPGYWFTVFFI) threads the bilayer. The Cytoplasmic segment spans residues 363–371 (EKLGRFKIQ). A helical transmembrane segment spans residues 372–392 (LVGFFMMSFFMFVIGVKYEYL). Topologically, residues 393–401 (KDENKNLFA) are extracellular. A helical membrane pass occupies residues 402–422 (LLYGLTFFFANFGPNSTTFVL). The Cytoplasmic portion of the chain corresponds to 423–433 (PAELFPTRVRS). A helical membrane pass occupies residues 434–454 (TCHAFSAASGKAGAMVGAFGI). At 455–468 (QYYTLDGTPRKIRR) the chain is on the extracellular side. Residues 469–489 (AMMILAFTNLIGFFCTFLVTE) traverse the membrane as a helical segment. The Cytoplasmic segment spans residues 490-528 (TKGRSLEEISGEDGRESELTATPNDRAPGIRQDSRTEKM). Residues 497 to 507 (EISGEDGRESE) show a composition bias toward basic and acidic residues. The tract at residues 497-528 (EISGEDGRESELTATPNDRAPGIRQDSRTEKM) is disordered.

It belongs to the major facilitator superfamily. Phosphate:H(+) symporter (TC 2.A.1.9) family. Mostly expressed in mycorrhizal roots. Also observed in root tips of non-mycorrhizal roots, in a phosphate (Pi) depended-manner, highest expression levels being observed in low Pi conditions.

Its subcellular location is the cell membrane. It catalyses the reaction phosphate(in) + H(+)(in) = phosphate(out) + H(+)(out). Its function is as follows. Low-affinity transporter for external inorganic phosphate (Pi) probably involved in the acquisition of phosphate released by arbuscular mycorrhizal (AM) fungi (e.g. Gigaspora gigantea, Glomus versiforme and G.intraradices) during AM symbiosis; required for propper mycorrhizal arbuscule morphology. Acts as a Pi-sensing machinery at the root tip level, independently of AM fungi, involved in the regulation of early root branching and lateral roots formation. This chain is Low affinity inorganic phosphate transporter 4, found in Medicago truncatula (Barrel medic).